The chain runs to 207 residues: MALHMILVMLSLLPLLEAQNPEHVNITIGEPITNETLSWLSDKWFFIGAAVLNPDYRQEIQKMQMVFFNITPNLINDTMELREYHTIDDHCVYNSTHLGIQRENGTLSKYVGGVKIFADLIVLRKHGAFMLAFDLKDEKKRGLSLNAKRPDITPELREVFQKAVKHVGMDESEIIFVDWKKDKCGQQEKKQLELEKETKKDPEEGQA.

Residues 1–18 form the signal peptide; that stretch reads MALHMILVMLSLLPLLEA. Gln-19 is subject to Pyrrolidone carboxylic acid. Asn-25, Asn-34, Asn-76, Asn-94, and Asn-104 each carry an N-linked (GlcNAc...) asparagine glycan. An intrachain disulfide couples Cys-91 to Cys-184.

This sequence belongs to the calycin superfamily. Lipocalin family. Expressed by the liver and secreted in plasma.

The protein resides in the secreted. Functions as a transport protein in the blood stream. Binds various ligands in the interior of its beta-barrel domain. Appears to function in modulating the activity of the immune system during the acute-phase reaction. The polypeptide is Alpha-1-acid glycoprotein 1 (Orm1) (Mus caroli (Ryukyu mouse)).